A 409-amino-acid chain; its full sequence is Argininosuccinate synthase (409 aa).

ATP-binding positions include 12–20 (AYSGGLDTS) and A39. L-citrulline is bound by residues Y90 and S95. Position 120 (G120) interacts with ATP. Residues T122, N126, and D127 each coordinate L-aspartate. N126 serves as a coordination point for L-citrulline. Residues R130, S181, S190, E266, and Y278 each coordinate L-citrulline.

It belongs to the argininosuccinate synthase family. Type 1 subfamily. In terms of assembly, homotetramer.

Its subcellular location is the cytoplasm. The enzyme catalyses L-citrulline + L-aspartate + ATP = 2-(N(omega)-L-arginino)succinate + AMP + diphosphate + H(+). It participates in amino-acid biosynthesis; L-arginine biosynthesis; L-arginine from L-ornithine and carbamoyl phosphate: step 2/3. The protein is Argininosuccinate synthase of Acidiphilium cryptum (strain JF-5).